A 684-amino-acid polypeptide reads, in one-letter code: DNA-directed RNA polymerase subunit beta' (684 aa).

Residues Cys69, Cys71, Cys87, and Cys90 each contribute to the Zn(2+) site. Mg(2+)-binding residues include Asp491, Asp493, and Asp495.

Belongs to the RNA polymerase beta' chain family. RpoC1 subfamily. In terms of assembly, in plastids the minimal PEP RNA polymerase catalytic core is composed of four subunits: alpha, beta, beta', and beta''. When a (nuclear-encoded) sigma factor is associated with the core the holoenzyme is formed, which can initiate transcription. Mg(2+) serves as cofactor. The cofactor is Zn(2+).

The protein resides in the plastid. It localises to the chloroplast. The enzyme catalyses RNA(n) + a ribonucleoside 5'-triphosphate = RNA(n+1) + diphosphate. In terms of biological role, DNA-dependent RNA polymerase catalyzes the transcription of DNA into RNA using the four ribonucleoside triphosphates as substrates. The chain is DNA-directed RNA polymerase subunit beta' from Phaseolus vulgaris (Kidney bean).